The sequence spans 207 residues: Large ribosomal subunit protein uL4 (207 aa).

A disordered region spans residues 47-78 (GTAKTKTRAEVRGGGKKPWRQKGTGRARQGSI). Residues 60-71 (GGKKPWRQKGTG) are compositionally biased toward basic residues.

The protein belongs to the universal ribosomal protein uL4 family. In terms of assembly, part of the 50S ribosomal subunit.

In terms of biological role, one of the primary rRNA binding proteins, this protein initially binds near the 5'-end of the 23S rRNA. It is important during the early stages of 50S assembly. It makes multiple contacts with different domains of the 23S rRNA in the assembled 50S subunit and ribosome. Functionally, forms part of the polypeptide exit tunnel. In Acholeplasma laidlawii (strain PG-8A), this protein is Large ribosomal subunit protein uL4.